Consider the following 370-residue polypeptide: Ribosomal RNA small subunit methyltransferase H (370 aa).

S-adenosyl-L-methionine-binding positions include 85 to 87 (GGH), Asp-104, Tyr-131, Asp-152, and Gln-159. Basic and acidic residues-rich tracts occupy residues 332 to 345 (GAER…ERNP) and 353 to 370 (RALE…RDAR). The segment at 332-370 (GAERATPEEIERNPRSAPVRLRALEKVAGRPTTARRDAR) is disordered.

It belongs to the methyltransferase superfamily. RsmH family.

It localises to the cytoplasm. It carries out the reaction cytidine(1402) in 16S rRNA + S-adenosyl-L-methionine = N(4)-methylcytidine(1402) in 16S rRNA + S-adenosyl-L-homocysteine + H(+). Functionally, specifically methylates the N4 position of cytidine in position 1402 (C1402) of 16S rRNA. The sequence is that of Ribosomal RNA small subunit methyltransferase H from Mycobacterium sp. (strain KMS).